A 121-amino-acid polypeptide reads, in one-letter code: MSLTNEQIIEAIGQKTVLEVVELIKAMEETFGVTAAVAAAGPAAAAAVVEEQTEFNVVLVEAGEKKVNVIKAVRELTGLGLKEAKEKVDGAPQVVAEGVSKEAAEDAKKKLEEAGAKVELK.

The protein belongs to the bacterial ribosomal protein bL12 family. In terms of assembly, homodimer. Part of the ribosomal stalk of the 50S ribosomal subunit. Forms a multimeric L10(L12)X complex, where L10 forms an elongated spine to which 2 to 4 L12 dimers bind in a sequential fashion. Binds GTP-bound translation factors.

Forms part of the ribosomal stalk which helps the ribosome interact with GTP-bound translation factors. Is thus essential for accurate translation. The protein is Large ribosomal subunit protein bL12 of Pseudomonas fluorescens (strain Pf0-1).